A 215-amino-acid chain; its full sequence is ATP-dependent dethiobiotin synthetase BioD (215 aa).

Asp13–Val18 provides a ligand contact to ATP. Thr17 is a binding site for Mg(2+). Residue Lys38 is part of the active site. A substrate-binding site is contributed by Thr42. ATP-binding positions include Asp50, Glu115 to Gly118, and Asn175 to His176. Asp50 and Glu115 together coordinate Mg(2+).

Belongs to the dethiobiotin synthetase family. As to quaternary structure, homodimer. Requires Mg(2+) as cofactor.

It is found in the cytoplasm. The catalysed reaction is (7R,8S)-7,8-diammoniononanoate + CO2 + ATP = (4R,5S)-dethiobiotin + ADP + phosphate + 3 H(+). The protein operates within cofactor biosynthesis; biotin biosynthesis; biotin from 7,8-diaminononanoate: step 1/2. Its function is as follows. Catalyzes a mechanistically unusual reaction, the ATP-dependent insertion of CO2 between the N7 and N8 nitrogen atoms of 7,8-diaminopelargonic acid (DAPA, also called 7,8-diammoniononanoate) to form a ureido ring. The chain is ATP-dependent dethiobiotin synthetase BioD from Neisseria meningitidis serogroup C (strain 053442).